The chain runs to 432 residues: Solute carrier family 38 member 8 (432 aa).

Transmembrane regions (helical) follow at residues 29–49, 59–79, 103–123, 144–164, 175–195, 215–237, 253–273, 292–312, 345–365, 368–388, and 409–429; these read AVFILLKSALGAGLLNFPWAF, FLVALVSLVFLISGLVILGYA, LCEICFLTNLLMISVAFLRVI, AAQNFTLPLISMLVIFPLSAL, ILGTLAACYLALVITVQYYLW, VFSVFPTICFGFQCHEAAVSIYC, LSLLACCLVYTLTGVYGFLTF, IIVARVLFAVSIVTVYPIVLF, LPLTFLWVVVTLTMALFLPDL, IISIIGGVSSFFIFIFPGLCL, and GILSVLVGTFIFGQSTAVAMV.

The protein belongs to the amino acid/polyamine transporter 2 family. As to expression, expressed in neurons located in the gray matter. Highly expressed in thalamus, hypothalamus, amygdala and pons. Expressed in the CA3 area of hippocampus and in the Purkinje layer of the cerebellum (at protein level). Expressed in the eye.

The protein localises to the membrane. It localises to the cytoplasm. It is found in the cell cortex. Its subcellular location is the cell projection. The protein resides in the axon. The enzyme catalyses L-glutamine(out) = L-glutamine(in). It catalyses the reaction L-alanine(in) = L-alanine(out). It carries out the reaction L-histidine(out) = L-histidine(in). The catalysed reaction is L-aspartate(out) = L-aspartate(in). The enzyme catalyses L-arginine(in) = L-arginine(out). It catalyses the reaction L-leucine(in) = L-leucine(out). In terms of biological role, electrogenic sodium-dependent amino acid transporter with a preference for L-glutamine, L-alanine, L-histidine, L-aspartate and L-arginine. May facilitate glutamine uptake in both excitatory and inhibitory neurons. The transport mechanism and stoichiometry remain to be elucidated. This is Solute carrier family 38 member 8 from Mus musculus (Mouse).